The sequence spans 222 residues: 2-hydroxypent-2,4-dienoate hydratase (222 aa).

This sequence belongs to the hydratase/decarboxylase family.

It functions in the pathway aromatic compound metabolism; benzoate degradation via hydroxylation. In terms of biological role, conversion of 2-hydroxypent-2,4-dienoate into 4-hydroxy-2-oxopentanoate. This chain is 2-hydroxypent-2,4-dienoate hydratase (xylJ), found in Pseudomonas putida (Arthrobacter siderocapsulatus).